The sequence spans 159 residues: MIFKHTQTSRAELSGTKLRSLAFALLTRKEYSKSELIEKLKLYAVDENEVIQLVDELSDQHYQSDQRVAELVLSSQLRKGKGPNRIKQALKNKELDTALINDEIQDIDWLEQAYQLKVKKFGTDVETDAKLKAKQIRFLQYRGFDMDIIMKAIHRIEEE.

It belongs to the RecX family.

Its subcellular location is the cytoplasm. Its function is as follows. Modulates RecA activity. This is Regulatory protein RecX from Acinetobacter baylyi (strain ATCC 33305 / BD413 / ADP1).